The primary structure comprises 307 residues: MSGNESVVNYDHFIDKRRVRKAFERAAPLYDQAAVLQREVCDRMLSRLEYIKYMPDVVLDAGSGTGYGTCKLLERYPDASMLAIDIATGMHHQARQRMNSMIPRWRQLFGVGRNQRTSRVRYVAGDIEQLPLEDSCAGLVWSNLALQWCNDLKKTFDEMRRILKNGGLFMFSTFGPDTLKELRQAFRHADDYSHVNRFADMHDIGDMLVHSGFATPVMDMEYITLTYDEVISVMRDLKAIGAHNATGARHRGLTGKNAWQKAIGHYETLRTGGKLPATFEVVYGHAWKPAPRTSILTPETRRHIGLE.

It belongs to the methyltransferase superfamily.

The enzyme catalyses malonyl-[ACP] + S-adenosyl-L-methionine = malonyl-[ACP] methyl ester + S-adenosyl-L-homocysteine. It functions in the pathway cofactor biosynthesis; biotin biosynthesis. In terms of biological role, converts the free carboxyl group of a malonyl-thioester to its methyl ester by transfer of a methyl group from S-adenosyl-L-methionine (SAM). It allows to synthesize pimeloyl-ACP via the fatty acid synthetic pathway. In Nitrosospira multiformis (strain ATCC 25196 / NCIMB 11849 / C 71), this protein is Malonyl-[acyl-carrier protein] O-methyltransferase.